We begin with the raw amino-acid sequence, 357 residues long: MVNAPIKLLIAASGTGGHLFPAIALAEKLPDYEIEWLGVPNRLETQLVPKQYPLNTIAVEGFQQGLGISSLVILGKLIGSILKVRRLLKQGNFQGVVTTGGYIAGPAVIAARSLGLPVIFHESNALPGKVTRFFGPWCSVVALGFDVATKYLPRATSVCVGTPVRSQFLNLGNNSQLDLAIPGDVPVIVVFGGSQGAVAVNQLVRQAAPAWFEAGAYVVHLTGDRDPDVDSLKHPQYIELPFYDNMAALLQRANLAISRSGAGSLTELTVCGTPAILIPYPFAAEDHQSYNAEVFTKAGAALTFKQSDLTAELLQTQVLNLLQSPTELAKMGENAKAIAVPDSADKLATLVREVVER.

Residues 15–17 (TGG), Asn124, Arg165, Ser194, and Gln288 each bind UDP-N-acetyl-alpha-D-glucosamine.

Belongs to the glycosyltransferase 28 family. MurG subfamily.

The protein resides in the cell inner membrane. The catalysed reaction is di-trans,octa-cis-undecaprenyl diphospho-N-acetyl-alpha-D-muramoyl-L-alanyl-D-glutamyl-meso-2,6-diaminopimeloyl-D-alanyl-D-alanine + UDP-N-acetyl-alpha-D-glucosamine = di-trans,octa-cis-undecaprenyl diphospho-[N-acetyl-alpha-D-glucosaminyl-(1-&gt;4)]-N-acetyl-alpha-D-muramoyl-L-alanyl-D-glutamyl-meso-2,6-diaminopimeloyl-D-alanyl-D-alanine + UDP + H(+). The protein operates within cell wall biogenesis; peptidoglycan biosynthesis. In terms of biological role, cell wall formation. Catalyzes the transfer of a GlcNAc subunit on undecaprenyl-pyrophosphoryl-MurNAc-pentapeptide (lipid intermediate I) to form undecaprenyl-pyrophosphoryl-MurNAc-(pentapeptide)GlcNAc (lipid intermediate II). The sequence is that of UDP-N-acetylglucosamine--N-acetylmuramyl-(pentapeptide) pyrophosphoryl-undecaprenol N-acetylglucosamine transferase from Nostoc sp. (strain PCC 7120 / SAG 25.82 / UTEX 2576).